We begin with the raw amino-acid sequence, 417 residues long: Serine hydroxymethyltransferase (417 aa).

Residues Leu-121 and Gly-125–Leu-127 contribute to the (6S)-5,6,7,8-tetrahydrofolate site. N6-(pyridoxal phosphate)lysine is present on Lys-229. Residue Ser-354–Phe-356 participates in (6S)-5,6,7,8-tetrahydrofolate binding.

Belongs to the SHMT family. Homodimer. The cofactor is pyridoxal 5'-phosphate.

It is found in the cytoplasm. It catalyses the reaction (6R)-5,10-methylene-5,6,7,8-tetrahydrofolate + glycine + H2O = (6S)-5,6,7,8-tetrahydrofolate + L-serine. It functions in the pathway one-carbon metabolism; tetrahydrofolate interconversion. Its pathway is amino-acid biosynthesis; glycine biosynthesis; glycine from L-serine: step 1/1. Catalyzes the reversible interconversion of serine and glycine with tetrahydrofolate (THF) serving as the one-carbon carrier. This reaction serves as the major source of one-carbon groups required for the biosynthesis of purines, thymidylate, methionine, and other important biomolecules. Also exhibits THF-independent aldolase activity toward beta-hydroxyamino acids, producing glycine and aldehydes, via a retro-aldol mechanism. The polypeptide is Serine hydroxymethyltransferase (Azotobacter vinelandii (strain DJ / ATCC BAA-1303)).